Consider the following 200-residue polypeptide: NADH-quinone oxidoreductase subunit C 1 (200 aa).

This sequence belongs to the complex I 30 kDa subunit family. In terms of assembly, NDH-1 is composed of 14 different subunits. Subunits NuoB, C, D, E, F, and G constitute the peripheral sector of the complex.

The protein localises to the cell inner membrane. It carries out the reaction a quinone + NADH + 5 H(+)(in) = a quinol + NAD(+) + 4 H(+)(out). Functionally, NDH-1 shuttles electrons from NADH, via FMN and iron-sulfur (Fe-S) centers, to quinones in the respiratory chain. The immediate electron acceptor for the enzyme in this species is believed to be ubiquinone. Couples the redox reaction to proton translocation (for every two electrons transferred, four hydrogen ions are translocated across the cytoplasmic membrane), and thus conserves the redox energy in a proton gradient. In Rhizobium etli (strain CIAT 652), this protein is NADH-quinone oxidoreductase subunit C 1.